The following is a 120-amino-acid chain: MVKLTSIAAGVAAIAATASATTTLAQSDERVNLVELGVYVSDIRAHLAQYYMFQAAHPTETYPVEVAEAVFNYGDFTTMLTGIAPDQVTRMITGVPWYSSRLKPAISSALSKDGIYTITN.

An N-terminal signal peptide occupies residues 1 to 25; that stretch reads MVKLTSIAAGVAAIAATASATTTLA.

This sequence belongs to the SRP1/TIP1 family. Seripauperin subfamily.

The sequence is that of Seripauperin-13 (PAU13) from Saccharomyces cerevisiae (strain ATCC 204508 / S288c) (Baker's yeast).